The primary structure comprises 500 residues: MMICHQCLDQDDSSEEEEAVSVYSPSTLVKLARQRLLREEALVISALKGLPNMLFPVIFEEAFINGHTKILKAMIPMWPFPYLSVGALTNNCNLKTLKAVLDGLDILLAQKVRSSRCKLRVLKWRDEQHDFCGIWPGSHEAEDLPELMTQKHPVQNNPDCGVKKELRVTTELSVMKGRLDDSATYLLEWAQQRKDSIHLLCRKLVIETLTKDTVIEIFKIVNADCIQELELYSLCLEDLAFLNPYLRQMDNLLELTLDHVTDSLSMGDSEMCEEEMITLVSQLPTFPCLQKLCVNDVYFIYGNLNEILRCLKKPLVSFCISNCELSQSDLDCLPYCLNIFELKCLYLIDIPLNHLCLDPLGFLLESVRHTLECLELKSCDMGEPQFNALLPALSQCSHLTDVSFWENELSLLFLKQLLQHTSKLTQLSYELYPAPLECYDDRGLILSHRLEQFCPELLDILRAKRQPKDIAFVTNPCSKCGRYYVYDPKTQRFSLEDTTL.

The stretch at 116 to 143 (RCKLRVLKWRDEQHDFCGIWPGSHEAED) is one LRR 1; degenerate repeat. An LRR 2; degenerate repeat occupies 198–222 (HLLCRKLVIETLTKDTVIEIFKIVN). One copy of the LRR 3; degenerate repeat lies at 223-248 (ADCIQELELYSLCLEDLAFLNPYLRQ). One copy of the LRR 4; degenerate repeat lies at 249 to 285 (MDNLLELTLDHVTDSLSMGDSEMCEEEMITLVSQLPT). LRR repeat units lie at residues 286-311 (FPCLQKLCVNDVYFIYGNLNEILRCL), 312-343 (KKPLVSFCISNCELSQSDLDCLPYCLNIFELK), 344-367 (CLYLIDIPLNHLCLDPLGFLLESV), 368-395 (RHTLECLELKSCDMGEPQFNALLPALSQ), and 396-420 (CSHLTDVSFWENELSLLFLKQLLQH).

Belongs to the PRAME family. As to expression, expressed in ovary, specifically in oocytes. Detected in follicles with two layers of granulosa cells, and are present in early as well as large antral follicles.

The sequence is that of Oogenesin-3 from Mus musculus (Mouse).